The following is a 237-amino-acid chain: N-(5'-phosphoribosyl)anthranilate isomerase (237 aa).

The protein belongs to the TrpF family.

The enzyme catalyses N-(5-phospho-beta-D-ribosyl)anthranilate = 1-(2-carboxyphenylamino)-1-deoxy-D-ribulose 5-phosphate. Its pathway is amino-acid biosynthesis; L-tryptophan biosynthesis; L-tryptophan from chorismate: step 3/5. In Desulfitobacterium hafniense (strain DSM 10664 / DCB-2), this protein is N-(5'-phosphoribosyl)anthranilate isomerase.